Reading from the N-terminus, the 671-residue chain is DNA ligase (671 aa).

NAD(+) contacts are provided by residues 32–36 (DAEYD), 81–82 (SL), and glutamate 113. Residue lysine 115 is the N6-AMP-lysine intermediate of the active site. The NAD(+) site is built by arginine 136, glutamate 173, lysine 290, and lysine 314. Cysteine 408, cysteine 411, cysteine 426, and cysteine 432 together coordinate Zn(2+). Positions 593 to 671 (EIDSPFAGKT…EAEMIRLLGA (79 aa)) constitute a BRCT domain.

This sequence belongs to the NAD-dependent DNA ligase family. LigA subfamily. The cofactor is Mg(2+). Mn(2+) is required as a cofactor.

It carries out the reaction NAD(+) + (deoxyribonucleotide)n-3'-hydroxyl + 5'-phospho-(deoxyribonucleotide)m = (deoxyribonucleotide)n+m + AMP + beta-nicotinamide D-nucleotide.. In terms of biological role, DNA ligase that catalyzes the formation of phosphodiester linkages between 5'-phosphoryl and 3'-hydroxyl groups in double-stranded DNA using NAD as a coenzyme and as the energy source for the reaction. It is essential for DNA replication and repair of damaged DNA. The chain is DNA ligase from Salmonella gallinarum (strain 287/91 / NCTC 13346).